Consider the following 877-residue polypeptide: Alanine--tRNA ligase (877 aa).

Zn(2+)-binding residues include H556, H560, C657, and H661.

This sequence belongs to the class-II aminoacyl-tRNA synthetase family. Zn(2+) is required as a cofactor.

The protein localises to the cytoplasm. It catalyses the reaction tRNA(Ala) + L-alanine + ATP = L-alanyl-tRNA(Ala) + AMP + diphosphate. Catalyzes the attachment of alanine to tRNA(Ala) in a two-step reaction: alanine is first activated by ATP to form Ala-AMP and then transferred to the acceptor end of tRNA(Ala). Also edits incorrectly charged Ser-tRNA(Ala) and Gly-tRNA(Ala) via its editing domain. In Wolbachia pipientis wMel, this protein is Alanine--tRNA ligase.